A 115-amino-acid polypeptide reads, in one-letter code: Iron-sulfur cluster insertion protein ErpA (115 aa).

Residues cysteine 43, cysteine 107, and cysteine 109 each contribute to the iron-sulfur cluster site.

It belongs to the HesB/IscA family. Homodimer. Iron-sulfur cluster serves as cofactor.

Required for insertion of 4Fe-4S clusters for at least IspG. The protein is Iron-sulfur cluster insertion protein ErpA of Photorhabdus laumondii subsp. laumondii (strain DSM 15139 / CIP 105565 / TT01) (Photorhabdus luminescens subsp. laumondii).